The primary structure comprises 615 residues: 1-deoxy-D-xylulose-5-phosphate synthase (615 aa).

Thiamine diphosphate-binding positions include His-72 and 113-115 (GHA). Mg(2+) is bound at residue Asp-144. Thiamine diphosphate contacts are provided by residues 145-146 (GA), Asn-173, Tyr-281, and Glu-360. Asn-173 is a Mg(2+) binding site.

It belongs to the transketolase family. DXPS subfamily. Homodimer. Requires Mg(2+) as cofactor. The cofactor is thiamine diphosphate.

The enzyme catalyses D-glyceraldehyde 3-phosphate + pyruvate + H(+) = 1-deoxy-D-xylulose 5-phosphate + CO2. It participates in metabolic intermediate biosynthesis; 1-deoxy-D-xylulose 5-phosphate biosynthesis; 1-deoxy-D-xylulose 5-phosphate from D-glyceraldehyde 3-phosphate and pyruvate: step 1/1. Catalyzes the acyloin condensation reaction between C atoms 2 and 3 of pyruvate and glyceraldehyde 3-phosphate to yield 1-deoxy-D-xylulose-5-phosphate (DXP). The polypeptide is 1-deoxy-D-xylulose-5-phosphate synthase (Thermus thermophilus (strain ATCC 27634 / DSM 579 / HB8)).